The sequence spans 79 residues: Conotoxin ArMSGL-021 (79 aa).

Residues 1-20 form the signal peptide; sequence MSRLGIMVLTLLLLVFIVTS. Residues 21–44 constitute a propeptide that is removed on maturation; that stretch reads HQDAGEKQATHRGAINFRWRRSLI. Intrachain disulfides connect Cys52–Cys64, Cys56–Cys73, and Cys63–Cys77. Leu78 is modified (leucine amide).

This sequence belongs to the conotoxin O3 superfamily. In terms of tissue distribution, expressed by the venom duct.

The protein resides in the secreted. This chain is Conotoxin ArMSGL-021, found in Conus arenatus (Sand-dusted cone).